Reading from the N-terminus, the 405-residue chain is Chorismate synthase (405 aa).

NADP(+) contacts are provided by Arg43 and Arg49. Residues 138–140 (RAS) and 259–260 (QA) contribute to the FMN site. Positions 275-286 (RRGSQAHDEMRP) are enriched in basic and acidic residues. The segment at 275–308 (RRGSQAHDEMRPGPDGVLRSTNRAGGLEGGMTNG) is disordered. Residues Gly303, 318-322 (KPIST), and Arg344 each bind FMN.

It belongs to the chorismate synthase family. Homotetramer. FMNH2 serves as cofactor.

It carries out the reaction 5-O-(1-carboxyvinyl)-3-phosphoshikimate = chorismate + phosphate. The protein operates within metabolic intermediate biosynthesis; chorismate biosynthesis; chorismate from D-erythrose 4-phosphate and phosphoenolpyruvate: step 7/7. Functionally, catalyzes the anti-1,4-elimination of the C-3 phosphate and the C-6 proR hydrogen from 5-enolpyruvylshikimate-3-phosphate (EPSP) to yield chorismate, which is the branch point compound that serves as the starting substrate for the three terminal pathways of aromatic amino acid biosynthesis. This reaction introduces a second double bond into the aromatic ring system. The chain is Chorismate synthase from Nocardia farcinica (strain IFM 10152).